A 321-amino-acid chain; its full sequence is Leucine-rich repeat-containing protein 46 (321 aa).

LRR repeat units lie at residues 45-66 (ELQT…EGLQ), 67-88 (NLHS…ACIP), 89-110 (SLRF…LDLP), and 111-132 (CLQF…EFPQ). In terms of domain architecture, LRRCT spans 142–184 (NSCTNQDGYRELVTEALPLLLDLDGQPVVERWISDEEDEASSD). Phosphoserine is present on residues serine 175 and serine 182. Residues 201 to 221 (LKELEQELSRHREHRQQTALT) are a coiled coil. The disordered stretch occupies residues 235–321 (DLPLLPGVPM…TKTTAKRSKK (87 aa)).

Its subcellular location is the cell projection. The protein localises to the cilium. It localises to the flagellum. Functionally, required for normal spermatogenesis and male fertility. Plays an important role in sperm flagellum biogenesis. The sequence is that of Leucine-rich repeat-containing protein 46 (LRRC46) from Homo sapiens (Human).